A 120-amino-acid polypeptide reads, in one-letter code: Large ribosomal subunit protein bL19 (120 aa).

The protein belongs to the bacterial ribosomal protein bL19 family.

Functionally, this protein is located at the 30S-50S ribosomal subunit interface and may play a role in the structure and function of the aminoacyl-tRNA binding site. This Microcystis aeruginosa (strain NIES-843 / IAM M-2473) protein is Large ribosomal subunit protein bL19.